The sequence spans 242 residues: Zinc finger protein ZOP1 (242 aa).

The Matrin-type zinc-finger motif lies at 11–42; that stretch reads KWCEFCKIWIQNNPTSIRNHDLGKRHRECVDK. Residues 42 to 71 are a coiled coil; sequence KKLTDMRERSAAKDKELKKNEKLLQQIEAK. Residues 154-242 are disordered; sequence VKKPVSSSGA…PLLGLYNRPF (89 aa). Over residues 155–172 the composition is skewed to low complexity; it reads KKPVSSSGAGPSVGKPPG. A compositionally biased stretch (basic and acidic residues) spans 201 to 233; that stretch reads RQDEKPKKVSAEEKAALKAREAARKRVEDREKP.

As to quaternary structure, component of a pre-mRNA splicing complex. Interacts with STA1. Interacts with PRP31.

It localises to the nucleus. The protein localises to the cajal body. Nucleic acid-binding protein that promotes Pol IV-dependent small interfering RNA (siRNA) accumulation, DNA methylation and transcriptional silencing. May possess both RNA-directed DNA methylation (RdDM)-dependent and -independent roles in transcriptional silencing. Acts as a pre-mRNA splicing factor that associates with several typical components of the splicing machinery as well as with Pol II. The polypeptide is Zinc finger protein ZOP1 (Arabidopsis thaliana (Mouse-ear cress)).